Reading from the N-terminus, the 358-residue chain is MRRVSGILAVAAFTISAFAGVIQPVAKDARDSAELDVKLTQVDGTVIKAVVTNNGDKDLNILNLNFFRDTAPVKKVSIYSQGVEVPFGGIRVRHKTSGLSSDVITYLAPGESFEDEFDVAITSDLSQGGPVVLQTQGYVPTTDTGGKTLSGVVRYKSNKLEIDVDGTTAAKSFAAMNQFVKIAKLSSCEGSQGDDTRRALRDCASLSTLAAAQAWAGGPKMLEYFKANDDATRKLVADRFTAVALESSNLTGGSTTYYCRDPYNICTNNIIAYTIPAENLISNCPIYYTEFDNVNRKCHGQDRVTTSLHEFTHASSVFSPGTKDIAYGYNACILLSTRDALNNADTFALFAQSINAGC.

Residues 1 to 19 (MRRVSGILAVAAFTISAFA) form the signal peptide. Positions 20 to 182 (GVIQPVAKDA…FAAMNQFVKI (163 aa)) are excised as a propeptide. Intrachain disulfides connect cysteine 188–cysteine 259 and cysteine 266–cysteine 284. N-linked (GlcNAc...) asparagine glycosylation is present at asparagine 249. Histidine 309 lines the Zn(2+) pocket. Glutamate 310 is a catalytic residue. Zn(2+) is bound by residues histidine 313 and aspartate 324.

The protein belongs to the peptidase M35 family. Requires Zn(2+) as cofactor.

The protein resides in the secreted. It carries out the reaction Preferential cleavage of bonds with hydrophobic residues in P1'. Also 3-Asn-|-Gln-4 and 8-Gly-|-Ser-9 bonds in insulin B chain.. In terms of biological role, secreted metalloproteinase that allows assimilation of proteinaceous substrates. Shows high activities on basic nuclear substrates such as histone and protamine. The sequence is that of Neutral protease 2 homolog PABG_02362 from Paracoccidioides brasiliensis (strain Pb03).